We begin with the raw amino-acid sequence, 1229 residues long: Pesticidal crystal protein Cry1Bb (1229 aa).

It belongs to the delta endotoxin family.

Promotes colloidosmotic lysis by binding to the midgut epithelial cells of many lepidopteran larvae. In Bacillus thuringiensis, this protein is Pesticidal crystal protein Cry1Bb (cry1Bb).